A 401-amino-acid polypeptide reads, in one-letter code: uncharacterized protein (401 aa).

The protein belongs to the serpin family.

Its function is as follows. May act as an inhibitor for a host chymotrypsin-like protease. This is an uncharacterized protein from Acanthamoeba polyphaga mimivirus (APMV).